The sequence spans 198 residues: FMN-dependent NADH:quinone oxidoreductase (198 aa).

FMN is bound by residues S10, 16 to 18 (SQS), 94 to 97 (MYNF), and 138 to 141 (TRGG).

Belongs to the azoreductase type 1 family. In terms of assembly, homodimer. Requires FMN as cofactor.

It carries out the reaction 2 a quinone + NADH + H(+) = 2 a 1,4-benzosemiquinone + NAD(+). The catalysed reaction is N,N-dimethyl-1,4-phenylenediamine + anthranilate + 2 NAD(+) = 2-(4-dimethylaminophenyl)diazenylbenzoate + 2 NADH + 2 H(+). In terms of biological role, quinone reductase that provides resistance to thiol-specific stress caused by electrophilic quinones. Also exhibits azoreductase activity. Catalyzes the reductive cleavage of the azo bond in aromatic azo compounds to the corresponding amines. The sequence is that of FMN-dependent NADH:quinone oxidoreductase from Shewanella baltica (strain OS223).